We begin with the raw amino-acid sequence, 146 residues long: Hemoglobin subunit beta (146 aa).

The residue at position 1 (Val1) is an N-acetylvaline. The 145-residue stretch at His2–His146 folds into the Globin domain. Thr12 is modified (phosphothreonine). The residue at position 44 (Ser44) is a Phosphoserine. Lys59 is subject to N6-acetyllysine. His63 provides a ligand contact to heme b. Lys82 carries the N6-acetyllysine modification. Residue His92 participates in heme b binding. Cys93 carries the S-nitrosocysteine modification. An N6-acetyllysine modification is found at Lys144.

Belongs to the globin family. As to quaternary structure, heterotetramer of two alpha chains and two beta chains. As to expression, red blood cells.

Functionally, involved in oxygen transport from the lung to the various peripheral tissues. The polypeptide is Hemoglobin subunit beta (HBB) (Procyon lotor (Raccoon)).